The primary structure comprises 144 residues: Dynein light chain Tctex-type protein 2B (144 aa).

This sequence belongs to the dynein light chain Tctex-type family. As to quaternary structure, light chain of the cytoplasmic dynein complex 2, a multisubunit complex composed at least of eleven different proteins. The cytoplasmic dynein 2 complex consists of two catalytic heavy chains (HCs) and a number of non-catalytic subunits presented by intermediate chains (ICs), light intermediate chains (LICs) and light chains (LCs). Among them, a heavy chain (DYNC2H1), two intermediate chains (DYNC2I2 and DYNC2I1), a light intermediate chain (DYNC2LI1), and a light chain (DYNLT2B) are unique to the dynein-2 complex, but a subset of the light chains are also shared by dynein-1 and dynein-2 complexes. The dimer DYNLT2B-DYNLT1/DYNLT3 interacts with DYNC2I1; this interaction is crucial for retrograde trafficking of ciliary proteins.

Its subcellular location is the dynein axonemal particle. Its function is as follows. Acts as one of several non-catalytic accessory components of the cytoplasmic dynein 2 complex (dynein-2 complex), a motor protein complex that drives the movement of cargos along microtubules within cilia and flagella in concert with the intraflagellar transport (IFT) system. Required for proper retrograde ciliary transport. The polypeptide is Dynein light chain Tctex-type protein 2B (Dynlt2b) (Mus musculus (Mouse)).